Reading from the N-terminus, the 99-residue chain is DNA-directed RNA polymerase subunit Rpo11 (99 aa).

This sequence belongs to the archaeal Rpo11/eukaryotic RPB11/RPC19 RNA polymerase subunit family. As to quaternary structure, part of the RNA polymerase complex.

Its subcellular location is the cytoplasm. The enzyme catalyses RNA(n) + a ribonucleoside 5'-triphosphate = RNA(n+1) + diphosphate. In terms of biological role, DNA-dependent RNA polymerase (RNAP) catalyzes the transcription of DNA into RNA using the four ribonucleoside triphosphates as substrates. The protein is DNA-directed RNA polymerase subunit Rpo11 of Aeropyrum pernix (strain ATCC 700893 / DSM 11879 / JCM 9820 / NBRC 100138 / K1).